The sequence spans 1148 residues: Envelopment polyprotein (1148 aa).

Residues 1 to 23 (MGELSPVCLYLLLQGLLLCNTGA) form the signal peptide. The Lumenal segment spans residues 24–495 (ARNLNELKME…VPGLHGWATM (472 aa)). 6 cysteine pairs are disulfide-bonded: cysteine 34–cysteine 159, cysteine 68–cysteine 165, cysteine 117–cysteine 136, cysteine 141–cysteine 146, cysteine 183–cysteine 193, and cysteine 218–cysteine 257. N-linked (GlcNAc...) asparagine; by host glycosylation is present at asparagine 142. A glycan (N-linked (GlcNAc...) asparagine; by host) is linked at asparagine 357. Disulfide bonds link cysteine 386–cysteine 445, cysteine 390–cysteine 399, cysteine 415–cysteine 434, and cysteine 462–cysteine 485. Asparagine 409 carries an N-linked (GlcNAc...) asparagine; by host glycan. Residues 496 to 516 (LLLLTLCFGWVLIPTITMILL) traverse the membrane as a helical segment. Topologically, residues 517 to 637 (KILIAFAYLC…LSLFRYRSRF (121 aa)) are cytoplasmic. The interval 526–543 (CSKYNTDSKFRILIEKVK) is binding to the ribonucleoprotein. 2 consecutive CCHC-type zinc fingers follow at residues 555 to 575 (CEVCQYECETAKELESHRKSC) and 580 to 601 (CPYCLNPSEATTSALQAHFKVC). Binding to the ribonucleoprotein stretches follow at residues 598–615 (FKVCKLTSRFQENLRKSL), 602–613 (KLTSRFQENLRK), and 621–635 (MQGCYRTLSLFRYRS). The ITAM domain occupies 621–644 (MQGCYRTLSLFRYRSRFFVGLVWC). The short motif at 625-628 (YRTL) is the YxxL element. A helical membrane pass occupies residues 638–658 (FVGLVWCVLLVLELIVWAASA). Over 659–1114 (ETQNLNAGWT…EWILGVLNGN (456 aa)) the chain is Lumenal. Intrachain disulfides connect cysteine 745-cysteine 780, cysteine 749-cysteine 787, cysteine 761-cysteine 894, cysteine 775-cysteine 905, cysteine 790-cysteine 913, cysteine 816-cysteine 825, cysteine 833-cysteine 842, and cysteine 873-cysteine 877. The interval 767–787 (YEYETGWGCNPPDCPGVGTGC) is fusion loop. An N-linked (GlcNAc...) asparagine; by host glycan is attached at asparagine 937. Intrachain disulfides connect cysteine 979-cysteine 1009, cysteine 1002-cysteine 1054, cysteine 1019-cysteine 1024, cysteine 1055-cysteine 1060, and cysteine 1094-cysteine 1098. Residues 1115 to 1135 (WMVVAVLVVLLILSILLFTLC) form a helical membrane-spanning segment. Binding to the ribonucleoprotein stretches follow at residues 1131–1143 (LFTLCCPRRPSYR) and 1131–1148 (LFTLCCPRRPSYRKEHKP). The Cytoplasmic portion of the chain corresponds to 1136-1148 (CPRRPSYRKEHKP).

Belongs to the hantavirus envelope glycoprotein family. In terms of assembly, homodimer. Homotetramer; forms heterotetrameric Gn-Gc spikes in the pre-fusion conformation. Interacts (via C-terminus) with the nucleoprotein. Interacts with host TUFM; this interaction contributes to the virus-induced degradation of mitochondria by autophagy, which leads to degradation of host MAVS and inhibition of type I interferon (IFN) responses. Interacts with host MAP1LC3B; this interaction contributes to the virus-induced degradation of mitochondria by autophagy, which leads to degradation of host MAVS and inhibition of type I interferon (IFN) responses. As to quaternary structure, homodimer. Homotetramer; forms heterotetrameric Gn-Gc spikes in the pre-fusion conformation. Homotrimer; forms homotrimer in the post-fusion conformation at acidic pH. Interacts (via C-terminus) with the nucleoprotein. Post-translationally, envelope polyprotein precursor is quickly cleaved in vivo just after synthesis, presumably by host signal peptidase.

It is found in the virion membrane. It localises to the host cell surface. Its subcellular location is the host Golgi apparatus membrane. The protein localises to the host endoplasmic reticulum membrane. The protein resides in the host mitochondrion. Functionally, forms homotetramers with glycoprotein C at the surface of the virion. Attaches the virion to host cell receptors including integrin ITGAV/ITGB3. This attachment induces virion internalization predominantly through clathrin-dependent endocytosis. Mediates the assembly and budding of infectious virus particles through its interaction with the nucleocapsid protein and the viral genome. May dysregulate normal immune and endothelial cell responses through an ITAM motif. Translocates to mitochondria, binds to host TUFM and recruits MAP1LC3B. These interactions induce mitochondrial autophagy and therefore destruction of host MAVS leading to inhibition of type I interferon (IFN) responses. Concomitant breakdown of glycoprotein N is apparently prevented by the nucleoprotein that may inhibit Gn-stimulated autophagosome-lysosome fusion. Interacts with the viral genomic RNA. In terms of biological role, forms homotetramers with glycoprotein N at the surface of the virion. Attaches the virion to host cell receptors including integrin ITGAV/ITGB3. This attachment induces virion internalization predominantly through clathrin-dependent endocytosis. Class II fusion protein that promotes fusion of viral membrane with host endosomal membrane after endocytosis of the virion. This is Envelopment polyprotein (GP) from Puumala virus (strain K27).